The following is a 122-amino-acid chain: Large ribosomal subunit protein bL12 (122 aa).

The protein belongs to the bacterial ribosomal protein bL12 family. Homodimer. Part of the ribosomal stalk of the 50S ribosomal subunit. Forms a multimeric L10(L12)X complex, where L10 forms an elongated spine to which 2 to 4 L12 dimers bind in a sequential fashion. Binds GTP-bound translation factors.

Its function is as follows. Forms part of the ribosomal stalk which helps the ribosome interact with GTP-bound translation factors. Is thus essential for accurate translation. The protein is Large ribosomal subunit protein bL12 of Mycoplasma genitalium (strain ATCC 33530 / DSM 19775 / NCTC 10195 / G37) (Mycoplasmoides genitalium).